We begin with the raw amino-acid sequence, 176 residues long: ATP-dependent protease subunit HslV (176 aa).

The active site involves T2. G157, C160, and T163 together coordinate Na(+).

The protein belongs to the peptidase T1B family. HslV subfamily. As to quaternary structure, a double ring-shaped homohexamer of HslV is capped on each side by a ring-shaped HslU homohexamer. The assembly of the HslU/HslV complex is dependent on binding of ATP.

It localises to the cytoplasm. The catalysed reaction is ATP-dependent cleavage of peptide bonds with broad specificity.. Its activity is regulated as follows. Allosterically activated by HslU binding. Its function is as follows. Protease subunit of a proteasome-like degradation complex believed to be a general protein degrading machinery. The chain is ATP-dependent protease subunit HslV from Pseudomonas fluorescens (strain SBW25).